The following is an 897-amino-acid chain: Probable basic-leucine zipper transcription factor R (897 aa).

2 disordered regions span residues 38 to 88 (DDNI…NIET) and 128 to 198 (YQQR…NSNS). Residues 44-75 (NNNNNNNNNNNNNNNNNNNNNNNNNNNNNNNN) show a composition bias toward low complexity. Residues 76 to 88 (IGSPQIMNENIET) show a composition bias toward polar residues. The stretch at 94-137 (QYLERLQSIQQQQHQCQTQIQQQLQNYQQQYEDQYQQRQQQYQD) forms a coiled coil. Residues 128–140 (YQQRQQQYQDQYQ) are compositionally biased toward low complexity. Polar residues predominate over residues 141–157 (KPYSSPPLNFNSIPPIT). Positions 158–198 (NNNNNNNNNNNNNNNNNNSNSNSNSNSNSNSNSNSNSNSNS) are enriched in low complexity. 2 coiled-coil regions span residues 228-258 (LQQQ…QQQQ) and 330-407 (QQLQ…QQQQ). The disordered stretch occupies residues 461–516 (LQLPTPFYSPQQQQQQHTPISSFIPPPSLPSSPPSPPSPPSPPPQQQQQQQQQQQQ). The span at 484-505 (IPPPSLPSSPPSPPSPPSPPPQ) shows a compositional bias: pro residues. Residues 506-516 (QQQQQQQQQQQ) are compositionally biased toward low complexity. One can recognise a bZIP domain in the interval 557 to 620 (ESKESIKKYN…SIEMMRMEPE (64 aa)). Residues 559–564 (KESIKK) are basic motif. The tract at residues 569–576 (IASRNYRL) is leucine-zipper.

The protein belongs to the bZIP family.

The protein localises to the nucleus. Probable transcriptional regulator. This Dictyostelium discoideum (Social amoeba) protein is Probable basic-leucine zipper transcription factor R (bzpR).